Here is a 301-residue protein sequence, read N- to C-terminus: Ubiquitin thioesterase OTU1 (301 aa).

The UBX-like stretch occupies residues 4–80 (KVTGAGINQV…TIESSDSNES (77 aa)). The OTU domain occupies 109–229 (LSVHPVLDDN…GIHYDSLTMN (121 aa)). The tract at residues 114 to 120 (VLDDNSC) is cys-loop. Aspartate 117 is a catalytic residue. The active-site Nucleophile is the cysteine 120. A Glycyl lysine isopeptide (Lys-Gly) (interchain with G-Cter in ubiquitin) cross-link involves residue lysine 160. Residues 169–179 (ILKMESWGGAI) are variable-loop. Residues 218 to 222 (FNGIH) are his-loop. Isoleucine 221 lines the substrate pocket. Histidine 222 is a catalytic residue. An S2 site region spans residues 243 to 248 (DDVLTA). The segment at 270–294 (IKCNTCQMTFVGEREVARHAESTGH) adopts a C2H2-type zinc-finger fold. Residue histidine 294 is part of the active site.

In terms of assembly, forms a complex composed of CDC48, NPL4, UFD1, DOA1, SHP1 and deubiquitinase OTU1; within the complex interacts with CDC48 and DOA1/UFD3.

The protein resides in the cytoplasm. It localises to the nucleus. The catalysed reaction is Thiol-dependent hydrolysis of ester, thioester, amide, peptide and isopeptide bonds formed by the C-terminal Gly of ubiquitin (a 76-residue protein attached to proteins as an intracellular targeting signal).. Functionally, hydrolase that can remove conjugated ubiquitin from proteins and may therefore play an important regulatory role at the level of protein turnover by preventing degradation. Participates in the regulation of the ubiquitin conjugation pathway involving CDC48 by hindering multiubiquitination of substrates at the CDC48 chaperone. May be indirectly involved in PIS1 gene expression. The sequence is that of Ubiquitin thioesterase OTU1 (OTU1) from Saccharomyces cerevisiae (strain ATCC 204508 / S288c) (Baker's yeast).